Here is a 246-residue protein sequence, read N- to C-terminus: Chloroplastic group IIB intron splicing facilitator CRS2-A, chloroplastic (246 aa).

Residues 1–34 (MFCASSSPITSPLYPKAYKFSQTKSNSKRFSSLR) constitute a chloroplast transit peptide. A tRNA-binding site is contributed by Tyr-64. Catalysis depends on His-69, which acts as the Proton acceptor. 3 residues coordinate tRNA: Tyr-114, Asn-116, and Asn-162.

This sequence belongs to the PTH family. CRS2 subfamily. As to quaternary structure, part of large ribonucleo-protein complexes that include group IIB introns and either CAF1 or CAF2.

The protein localises to the plastid. It localises to the chloroplast stroma. In terms of biological role, required for the splicing of group IIB introns in chloroplasts. In Arabidopsis thaliana (Mouse-ear cress), this protein is Chloroplastic group IIB intron splicing facilitator CRS2-A, chloroplastic (CRS2A).